Consider the following 430-residue polypeptide: Delta(14)-sterol reductase (430 aa).

The next 6 helical transmembrane spans lie at 12 to 32 (IGTG…HFLI), 67 to 87 (LAVA…PAEI), 109 to 129 (FLVF…TWWF), 230 to 250 (FVSD…VDAL), 267 to 287 (LGVM…CLQA), and 290 to 310 (LASF…AVQF). Residues lysine 323, arginine 327, leucine 350, tryptophan 355, and 362–363 (NY) contribute to the NADP(+) site. 2 consecutive transmembrane segments (helical) span residues 349–369 (LLIS…DWIM) and 376–396 (TTGF…ILLL). NADP(+) is bound by residues aspartate 402, 406–410 (CREKY), and tyrosine 417.

The protein belongs to the ERG4/ERG24 family.

Its subcellular location is the membrane. The catalysed reaction is 4,4-dimethyl-5alpha-cholesta-8,24-dien-3beta-ol + NADP(+) = 4,4-dimethyl-5alpha-cholesta-8,14,24-trien-3beta-ol + NADPH + H(+). The protein operates within steroid biosynthesis; zymosterol biosynthesis; zymosterol from lanosterol: step 2/6. In terms of biological role, reduces the C14=C15 double bond of 4,4-dimethyl-cholesta-8,14,24-trienol to produce 4,4-dimethyl-cholesta-8,24-dienol. This Ascobolus immersus protein is Delta(14)-sterol reductase (ERG3).